The following is a 485-amino-acid chain: Adenosylhomocysteinase (485 aa).

3 residues coordinate substrate: Thr64, Asp139, and Glu205. Position 206 to 208 (206 to 208 (TTT)) interacts with NAD(+). Substrate is bound by residues Lys235 and Asp239. NAD(+) is bound by residues Asn240, 269-274 (GYGDVG), Glu292, Asn327, 348-350 (IGH), and Asn397.

This sequence belongs to the adenosylhomocysteinase family. Homotetramer. Requires NAD(+) as cofactor.

It catalyses the reaction S-adenosyl-L-homocysteine + H2O = L-homocysteine + adenosine. It participates in amino-acid biosynthesis; L-homocysteine biosynthesis; L-homocysteine from S-adenosyl-L-homocysteine: step 1/1. Functionally, adenosylhomocysteine is a competitive inhibitor of S-adenosyl-L-methionine-dependent methyl transferase reactions; therefore adenosylhomocysteinase may play a key role in the control of methylations via regulation of the intracellular concentration of adenosylhomocysteine. This is Adenosylhomocysteinase (SAHH) from Catharanthus roseus (Madagascar periwinkle).